The primary structure comprises 199 residues: Recombination protein RecR (199 aa).

A C4-type zinc finger spans residues 59–74; sequence CLNCGNVGTSDICALC. Positions 82–176 constitute a Toprim domain; sequence GELCVVEDVA…KLTSLAQGVP (95 aa).

Belongs to the RecR family.

May play a role in DNA repair. It seems to be involved in an RecBC-independent recombinational process of DNA repair. It may act with RecF and RecO. The protein is Recombination protein RecR of Ruegeria sp. (strain TM1040) (Silicibacter sp.).